The following is a 146-amino-acid chain: Hemoglobin subunit beta (146 aa).

N-acetylvaline is present on valine 1. The region spanning 2-146 (HLTDAEKAAI…VATALGHKYH (145 aa)) is the Globin domain. An N6-acetyllysine modification is found at lysine 59. Histidine 63 provides a ligand contact to heme b. Residue lysine 82 is modified to N6-acetyllysine. Histidine 92 lines the heme b pocket. Cysteine 93 is modified (S-nitrosocysteine). Position 144 is an N6-acetyllysine (lysine 144).

The protein belongs to the globin family. As to quaternary structure, heterotetramer of two alpha chains and two beta chains. In terms of tissue distribution, red blood cells.

Involved in oxygen transport from the lung to the various peripheral tissues. The protein is Hemoglobin subunit beta (HBB) of Ondatra zibethicus (Muskrat).